A 217-amino-acid chain; its full sequence is Probable transaldolase (217 aa).

Lys83 serves as the catalytic Schiff-base intermediate with substrate.

The protein belongs to the transaldolase family. Type 3B subfamily.

The protein localises to the cytoplasm. The catalysed reaction is D-sedoheptulose 7-phosphate + D-glyceraldehyde 3-phosphate = D-erythrose 4-phosphate + beta-D-fructose 6-phosphate. Its pathway is carbohydrate degradation; pentose phosphate pathway; D-glyceraldehyde 3-phosphate and beta-D-fructose 6-phosphate from D-ribose 5-phosphate and D-xylulose 5-phosphate (non-oxidative stage): step 2/3. Transaldolase is important for the balance of metabolites in the pentose-phosphate pathway. The chain is Probable transaldolase from Brucella melitensis biotype 1 (strain ATCC 23456 / CCUG 17765 / NCTC 10094 / 16M).